The chain runs to 491 residues: Ketol-acid reductoisomerase (NADP(+)) (491 aa).

Positions 15-208 constitute a KARI N-terminal Rossmann domain; that stretch reads AQLGKCRFMG…GGHRAGVLES (194 aa). NADP(+)-binding positions include 45-48, arginine 68, arginine 76, serine 78, and 108-110; these read CGAQ and DKQ. The active site involves histidine 132. Residue glycine 158 participates in NADP(+) binding. KARI C-terminal knotted domains are found at residues 209 to 344 and 345 to 484; these read SFVA…TAPQ and YEGK…MTDM. Residues aspartate 217, glutamate 221, glutamate 389, and glutamate 393 each coordinate Mg(2+). Serine 414 contacts substrate.

The protein belongs to the ketol-acid reductoisomerase family. It depends on Mg(2+) as a cofactor.

The enzyme catalyses (2R)-2,3-dihydroxy-3-methylbutanoate + NADP(+) = (2S)-2-acetolactate + NADPH + H(+). The catalysed reaction is (2R,3R)-2,3-dihydroxy-3-methylpentanoate + NADP(+) = (S)-2-ethyl-2-hydroxy-3-oxobutanoate + NADPH + H(+). It participates in amino-acid biosynthesis; L-isoleucine biosynthesis; L-isoleucine from 2-oxobutanoate: step 2/4. It functions in the pathway amino-acid biosynthesis; L-valine biosynthesis; L-valine from pyruvate: step 2/4. Functionally, involved in the biosynthesis of branched-chain amino acids (BCAA). Catalyzes an alkyl-migration followed by a ketol-acid reduction of (S)-2-acetolactate (S2AL) to yield (R)-2,3-dihydroxy-isovalerate. In the isomerase reaction, S2AL is rearranged via a Mg-dependent methyl migration to produce 3-hydroxy-3-methyl-2-ketobutyrate (HMKB). In the reductase reaction, this 2-ketoacid undergoes a metal-dependent reduction by NADPH to yield (R)-2,3-dihydroxy-isovalerate. The chain is Ketol-acid reductoisomerase (NADP(+)) from Salmonella typhimurium (strain LT2 / SGSC1412 / ATCC 700720).